A 184-amino-acid chain; its full sequence is Probable RNA 2'-phosphotransferase (184 aa).

The protein belongs to the KptA/TPT1 family.

In terms of biological role, removes the 2'-phosphate from RNA via an intermediate in which the phosphate is ADP-ribosylated by NAD followed by a presumed transesterification to release the RNA and generate ADP-ribose 1''-2''-cyclic phosphate (APPR&gt;P). May function as an ADP-ribosylase. This is Probable RNA 2'-phosphotransferase from Shigella boydii serotype 18 (strain CDC 3083-94 / BS512).